We begin with the raw amino-acid sequence, 547 residues long: Chaperonin GroEL 3 (547 aa).

ATP is bound by residues 30-33 (TLGP), Lys-51, 87-91 (DGTTT), Gly-415, and Asp-496.

This sequence belongs to the chaperonin (HSP60) family. As to quaternary structure, forms a cylinder of 14 subunits composed of two heptameric rings stacked back-to-back. Interacts with the co-chaperonin GroES.

It is found in the cytoplasm. It carries out the reaction ATP + H2O + a folded polypeptide = ADP + phosphate + an unfolded polypeptide.. Its function is as follows. Together with its co-chaperonin GroES, plays an essential role in assisting protein folding. The GroEL-GroES system forms a nano-cage that allows encapsulation of the non-native substrate proteins and provides a physical environment optimized to promote and accelerate protein folding. The chain is Chaperonin GroEL 3 from Bradyrhizobium sp. (strain ORS 278).